The following is a 774-amino-acid chain: Chondroitin sulfate synthase 2 (774 aa).

Residues 1 to 15 (MRASLLLSVLRPAGP) are Cytoplasmic-facing. The chain crosses the membrane as a helical; Signal-anchor for type II membrane protein span at residues 16 to 34 (VAVGISLGFTLSLLSVTWV). Residues 35–774 (EEPCGPGPPQ…LFEQEQGNST (740 aa)) are Lumenal-facing. Residues 37 to 103 (PCGPGPPQPG…AQPGQATKKA (67 aa)) are disordered. The segment covering 54-67 (GNTNAARRPNSVQP) has biased composition (polar residues). N138 and N361 each carry an N-linked (GlcNAc...) asparagine glycan. A divalent metal cation is bound at residue D616.

This sequence belongs to the chondroitin N-acetylgalactosaminyltransferase family. Interacts with PRKN. Mn(2+) is required as a cofactor. Co(2+) serves as cofactor. As to expression, isoform 1, isoform 2 and isoform 3 are expressed in brain (at protein level).

It localises to the golgi apparatus. Its subcellular location is the golgi stack membrane. It is found in the cytoplasm. The protein resides in the cytosol. The protein localises to the mitochondrion. It localises to the mitochondrion matrix. The enzyme catalyses 3-O-(beta-D-GlcA-(1-&gt;3)-beta-D-GalNAc-(1-&gt;4)-beta-D-GlcA-(1-&gt;3)-beta-D-Gal-(1-&gt;3)-beta-D-Gal-(1-&gt;4)-beta-D-Xyl)-L-seryl-[protein] + UDP-N-acetyl-alpha-D-galactosamine = 3-O-(beta-D-GalNAc-(1-&gt;4)-beta-D-GlcA-(1-&gt;3)-beta-D-GalNAc-(1-&gt;4)-beta-D-GlcA-(1-&gt;3)-beta-D-Gal-(1-&gt;3)-beta-D-Gal-(1-&gt;4)-beta-D-Xyl)-L-seryl-[protein] + UDP + H(+). It carries out the reaction 3-O-{beta-D-GlcA-(1-&gt;3)-[beta-D-GalNAc-(1-&gt;4)-beta-D-GlcA-(1-&gt;3)](n)-beta-D-GalNAc-(1-&gt;4)-beta-D-GlcA-(1-&gt;3)-beta-D-Gal-(1-&gt;3)-beta-D-Gal-(1-&gt;4)-beta-D-Xyl}-L-seryl-[protein] + UDP-N-acetyl-alpha-D-galactosamine = 3-O-{[beta-D-GalNAc-(1-&gt;4)-beta-D-GlcA-(1-&gt;3)](n+1)-beta-D-GalNAc-(1-&gt;4)-beta-D-GlcA-(1-&gt;3)-beta-D-Gal-(1-&gt;3)-beta-D-Gal-(1-&gt;4)-beta-D-Xyl}-L-seryl-[protein] + UDP + H(+). The catalysed reaction is 3-O-(beta-D-GalNAc-(1-&gt;4)-beta-D-GlcA-(1-&gt;3)-beta-D-Gal-(1-&gt;3)-beta-D-Gal-(1-&gt;4)-beta-D-Xyl)-L-seryl-[protein] + UDP-alpha-D-glucuronate = 3-O-(beta-D-GlcA-(1-&gt;3)-beta-D-GalNAc-(1-&gt;4)-beta-D-GlcA-(1-&gt;3)-beta-D-Gal-(1-&gt;3)-beta-D-Gal-(1-&gt;4)-beta-D-Xyl)-L-seryl-[protein] + UDP + H(+). It catalyses the reaction 3-O-{[beta-D-GalNAc-(1-&gt;4)-beta-D-GlcA-(1-&gt;3)](n)-beta-D-GalNAc-(1-&gt;4)-beta-D-GlcA-(1-&gt;3)-beta-D-Gal-(1-&gt;3)-beta-D-Gal-(1-&gt;4)-beta-D-Xyl}-L-seryl-[protein] + UDP-alpha-D-glucuronate = 3-O-{beta-D-GlcA-(1-&gt;3)-[beta-D-GalNAc-(1-&gt;4)-beta-D-GlcA-(1-&gt;3)](n)-beta-D-GalNAc-(1-&gt;4)-beta-D-GlcA-(1-&gt;3)-beta-D-Gal-(1-&gt;3)-beta-D-Gal-(1-&gt;4)-beta-D-Xyl}-L-seryl-[protein] + UDP + H(+). Functionally, has both beta-1,3-glucuronic acid and beta-1,4-N-acetylgalactosamine transferase activity. Transfers glucuronic acid (GlcUA) from UDP-GlcUA and N-acetylgalactosamine (GalNAc) from UDP-GalNAc to the non-reducing end of the elongating chondroitin polymer. Seems to act as a specific activating factor for CHSY1 in chondroitin polymerization. Its function is as follows. May facilitate PRKN transport into the mitochondria. In collaboration with PRKN, may enhance cell viability and protect cells from oxidative stress. In Mus musculus (Mouse), this protein is Chondroitin sulfate synthase 2.